A 512-amino-acid chain; its full sequence is Alpha-amylase (512 aa).

A signal peptide spans 1-29 (MKQQKRLYARLLTLLFALIFLLPHSAAAA). Ca(2+)-binding residues include Asn133, Asp190, Ala210, Asp212, Asp223, Asp229, Asp231, and Asp233. Residue Asp190 coordinates Na(+). The Na(+) site is built by Asp212, Asp223, and Asp229. The active-site Nucleophile is the Asp260. His264 provides a ligand contact to Ca(2+). Glu290 (proton donor) is an active-site residue. Gly329, Tyr331, His435, Asp436, and Asp459 together coordinate Ca(2+).

The protein belongs to the glycosyl hydrolase 13 family. In terms of assembly, monomer. The cofactor is Ca(2+). Na(+) is required as a cofactor.

It localises to the secreted. The enzyme catalyses Endohydrolysis of (1-&gt;4)-alpha-D-glucosidic linkages in polysaccharides containing three or more (1-&gt;4)-alpha-linked D-glucose units.. This is Alpha-amylase (amyS) from Bacillus licheniformis.